We begin with the raw amino-acid sequence, 425 residues long: Protein upregulated in glial subsets pugs-5 (425 aa).

Positions 355-373 (NNNDVEKSTQIEKKPEKQG) are enriched in basic and acidic residues. Residues 355–407 (NNNDVEKSTQIEKKPEKQGPEIQEEVVEMETVKDEQPPKTSAVRFKENSPRLM) form a disordered region.

In Caenorhabditis elegans, this protein is Protein upregulated in glial subsets pugs-5.